The sequence spans 203 residues: dATP triphosphohydrolase (203 aa).

Arginine 17 lines the dATP pocket. Co(2+)-binding residues include histidine 31, histidine 73, aspartate 74, glutamate 77, aspartate 82, and aspartate 130.

This sequence belongs to the Caudovirales dATP triphosphohydrolase family. Co(2+) serves as cofactor.

It carries out the reaction dATP + H2O = 2'-deoxyadenosine + triphosphate + H(+). It catalyses the reaction dADP + H2O = 2'-deoxyadenosine + diphosphate. The enzyme catalyses dAMP + H2O = 2'-deoxyadenosine + phosphate. Functionally, catalyzes the hydrolysis of dATP, dADP and dAMP into dA. This step is essential for Z-genome synthesis (containing aminoadenine instead of adenine). Specifically removes dATP and its precursor dADP from the nucleotide pool of the host, preventing the incorporation of A into the phage genome and favoring the integration of the Z-base into the viral genome. The sequence is that of dATP triphosphohydrolase (datZ) from Acinetobacter phage SH-Ab 15497.